We begin with the raw amino-acid sequence, 479 residues long: Sulfate adenylyltransferase subunit 1 (479 aa).

Positions 25–239 (KSLLRFLTCG…EVLETVDIQR (215 aa)) constitute a tr-type G domain. Residues 34 to 41 (GSVDDGKS) are G1. Residue 34–41 (GSVDDGKS) participates in GTP binding. Positions 92 to 96 (GITID) are G2. Positions 113–116 (DTPG) are G3. Residues 113–117 (DTPGH) and 168–171 (NKMD) contribute to the GTP site. Residues 168 to 171 (NKMD) form a G4 region. Positions 206 to 208 (SAL) are G5.

It belongs to the TRAFAC class translation factor GTPase superfamily. Classic translation factor GTPase family. CysN/NodQ subfamily. As to quaternary structure, heterodimer composed of CysD, the smaller subunit, and CysN.

The catalysed reaction is sulfate + ATP + H(+) = adenosine 5'-phosphosulfate + diphosphate. The protein operates within sulfur metabolism; hydrogen sulfide biosynthesis; sulfite from sulfate: step 1/3. Functionally, with CysD forms the ATP sulfurylase (ATPS) that catalyzes the adenylation of sulfate producing adenosine 5'-phosphosulfate (APS) and diphosphate, the first enzymatic step in sulfur assimilation pathway. APS synthesis involves the formation of a high-energy phosphoric-sulfuric acid anhydride bond driven by GTP hydrolysis by CysN coupled to ATP hydrolysis by CysD. In Salmonella choleraesuis (strain SC-B67), this protein is Sulfate adenylyltransferase subunit 1.